A 720-amino-acid chain; its full sequence is Phosphoribosylformylglycinamidine synthase subunit PurL (720 aa).

Residue His47 is part of the active site. Tyr50 and Lys89 together coordinate ATP. Residue Glu91 participates in Mg(2+) binding. Substrate is bound by residues 92–95 (SHNH) and Arg114. Catalysis depends on His93, which acts as the Proton acceptor. Residue Asp115 coordinates Mg(2+). Gln238 is a binding site for substrate. Asp266 contributes to the Mg(2+) binding site. A substrate-binding site is contributed by 310-312 (ESQ). Positions 488 and 525 each coordinate ATP. Asn526 contributes to the Mg(2+) binding site. A substrate-binding site is contributed by Ser528.

This sequence belongs to the FGAMS family. In terms of assembly, monomer. Part of the FGAM synthase complex composed of 1 PurL, 1 PurQ and 2 PurS subunits.

It is found in the cytoplasm. The catalysed reaction is N(2)-formyl-N(1)-(5-phospho-beta-D-ribosyl)glycinamide + L-glutamine + ATP + H2O = 2-formamido-N(1)-(5-O-phospho-beta-D-ribosyl)acetamidine + L-glutamate + ADP + phosphate + H(+). Its pathway is purine metabolism; IMP biosynthesis via de novo pathway; 5-amino-1-(5-phospho-D-ribosyl)imidazole from N(2)-formyl-N(1)-(5-phospho-D-ribosyl)glycinamide: step 1/2. Part of the phosphoribosylformylglycinamidine synthase complex involved in the purines biosynthetic pathway. Catalyzes the ATP-dependent conversion of formylglycinamide ribonucleotide (FGAR) and glutamine to yield formylglycinamidine ribonucleotide (FGAM) and glutamate. The FGAM synthase complex is composed of three subunits. PurQ produces an ammonia molecule by converting glutamine to glutamate. PurL transfers the ammonia molecule to FGAR to form FGAM in an ATP-dependent manner. PurS interacts with PurQ and PurL and is thought to assist in the transfer of the ammonia molecule from PurQ to PurL. The sequence is that of Phosphoribosylformylglycinamidine synthase subunit PurL from Cereibacter sphaeroides (strain KD131 / KCTC 12085) (Rhodobacter sphaeroides).